We begin with the raw amino-acid sequence, 273 residues long: Large ribosomal subunit protein uL2 (273 aa).

Residues 221 to 263 (RGTAMNPVDHPHGGGEGRNFGKHPVSPWGLQTKGKKTRKNKRT) form a disordered region. Over residues 253-263 (KGKKTRKNKRT) the composition is skewed to basic residues.

The protein belongs to the universal ribosomal protein uL2 family. In terms of assembly, part of the 50S ribosomal subunit. Forms a bridge to the 30S subunit in the 70S ribosome.

One of the primary rRNA binding proteins. Required for association of the 30S and 50S subunits to form the 70S ribosome, for tRNA binding and peptide bond formation. It has been suggested to have peptidyltransferase activity; this is somewhat controversial. Makes several contacts with the 16S rRNA in the 70S ribosome. The chain is Large ribosomal subunit protein uL2 from Buchnera aphidicola subsp. Baizongia pistaciae (strain Bp).